Here is a 452-residue protein sequence, read N- to C-terminus: Putative tripartite motif-containing protein 49B (452 aa).

The RING-type zinc finger occupies 15 to 56 (CPICMNYFIDPVTIDCGHSFCRPCFYLNWKDSPFLVQCSECT). The B box-type zinc finger occupies 88–129 (SEEQMCGTHRETKKMFCEVDRSLLCLLCSSSQEHRDHRHCPI). Zn(2+)-binding residues include Cys93, His96, Cys115, and His121. The region spanning 269–452 (ELSAGPITGL…LRPIFCCIHF (184 aa)) is the B30.2/SPRY domain.

It belongs to the TRIM/RBCC family.

The chain is Putative tripartite motif-containing protein 49B (TRIM49B) from Homo sapiens (Human).